A 287-amino-acid polypeptide reads, in one-letter code: Damage-control phosphatase PH1575 (287 aa).

Residues 7–10 (CLTC) carry the Subfamily I CxxC motif motif. Mn(2+) is bound by residues D156, N157, and D191. A Subfamily I GNFE motif motif is present at residues 243–246 (GNFE). The Subfamily I KC motif motif lies at 263–264 (KC).

The protein belongs to the damage-control phosphatase family. Nucleotides phosphatase I subfamily. Mn(2+) is required as a cofactor. The cofactor is Ni(2+). [2Fe-2S] cluster serves as cofactor.

With respect to regulation, activity is strongly promoted by Co(2+), Ni(2+), Mg(2+), Mn(2+), Ca(2+), Zn(2+) and Cu(2+). Activity is inhibited by EDTA. Its function is as follows. Metal-dependent phosphatase with probable damage-control functions. Shows phosphatase activity against p-nitrophenyl phosphate (pNPP), but natural substrates have not been identified yet. Low phosphatase activity against 8-oxo nucleotides suggests that it could hydrolyze oxidatively damaged purine nucleotides or their biosynthetic intermediates. The chain is Damage-control phosphatase PH1575 from Pyrococcus horikoshii (strain ATCC 700860 / DSM 12428 / JCM 9974 / NBRC 100139 / OT-3).